We begin with the raw amino-acid sequence, 210 residues long: N-(5'-phosphoribosyl)anthranilate isomerase (210 aa).

This sequence belongs to the TrpF family.

It carries out the reaction N-(5-phospho-beta-D-ribosyl)anthranilate = 1-(2-carboxyphenylamino)-1-deoxy-D-ribulose 5-phosphate. The protein operates within amino-acid biosynthesis; L-tryptophan biosynthesis; L-tryptophan from chorismate: step 3/5. This chain is N-(5'-phosphoribosyl)anthranilate isomerase, found in Crocosphaera subtropica (strain ATCC 51142 / BH68) (Cyanothece sp. (strain ATCC 51142)).